The chain runs to 342 residues: UDP-3-O-acylglucosamine N-acyltransferase (342 aa).

Residue H234 is the Proton acceptor of the active site.

This sequence belongs to the transferase hexapeptide repeat family. LpxD subfamily. As to quaternary structure, homotrimer.

It catalyses the reaction a UDP-3-O-[(3R)-3-hydroxyacyl]-alpha-D-glucosamine + a (3R)-hydroxyacyl-[ACP] = a UDP-2-N,3-O-bis[(3R)-3-hydroxyacyl]-alpha-D-glucosamine + holo-[ACP] + H(+). It participates in bacterial outer membrane biogenesis; LPS lipid A biosynthesis. Its function is as follows. Catalyzes the N-acylation of UDP-3-O-acylglucosamine using 3-hydroxyacyl-ACP as the acyl donor. Is involved in the biosynthesis of lipid A, a phosphorylated glycolipid that anchors the lipopolysaccharide to the outer membrane of the cell. In Oleidesulfovibrio alaskensis (strain ATCC BAA-1058 / DSM 17464 / G20) (Desulfovibrio alaskensis), this protein is UDP-3-O-acylglucosamine N-acyltransferase.